Here is a 199-residue protein sequence, read N- to C-terminus: Peroxiredoxin-1 (199 aa).

Position 2 is an N-acetylserine (Ser-2). Residues 6-165 (AKIGHPAPNF…TLRLVQAFQF (160 aa)) enclose the Thioredoxin domain. The residue at position 7 (Lys-7) is an N6-acetyllysine; alternate. A Glycyl lysine isopeptide (Lys-Gly) (interchain with G-Cter in SUMO2); alternate cross-link involves residue Lys-7. 2 positions are modified to N6-acetyllysine: Lys-16 and Lys-27. Ser-32 carries the phosphoserine modification. N6-acetyllysine; alternate is present on Lys-35. The residue at position 35 (Lys-35) is an N6-succinyllysine; alternate. Cys-52 acts as the Cysteine sulfenic acid (-SOH) intermediate in catalysis. The residue at position 90 (Thr-90) is a Phosphothreonine. Lys-120 participates in a covalent cross-link: Glycyl lysine isopeptide (Lys-Gly) (interchain with G-Cter in SUMO2). At Lys-136 the chain carries N6-acetyllysine. Residues 176–199 (GWKPGSDTIKPDVQKSKEYFSKQK) form a disordered region. A compositionally biased stretch (basic and acidic residues) spans 184–199 (IKPDVQKSKEYFSKQK). A Glycyl lysine isopeptide (Lys-Gly) (interchain with G-Cter in SUMO1) cross-link involves residue Lys-185. The residue at position 197 (Lys-197) is an N6-acetyllysine.

It belongs to the peroxiredoxin family. AhpC/Prx1 subfamily. In terms of assembly, homodimer; disulfide-linked, upon oxidation. 5 homodimers assemble to form a ring-like decamer. Interacts with GDPD5; forms a mixed-disulfide with GDPD5. Interacts with SESN1 and SESN2. Interacts with FAM107A. Post-translationally, phosphorylated on Thr-90 during the M-phase, which leads to a decrease in enzymatic activity. In terms of processing, acetylation increases reducing activity and resistance to superoxidation. Deacetylated by HDAC6 which decreases reducing activity. Detected in heart and skeletal muscle (at protein level).

The protein localises to the cytoplasm. The catalysed reaction is a hydroperoxide + [thioredoxin]-dithiol = an alcohol + [thioredoxin]-disulfide + H2O. Thiol-specific peroxidase that catalyzes the reduction of hydrogen peroxide and organic hydroperoxides to water and alcohols, respectively. Plays a role in cell protection against oxidative stress by detoxifying peroxides and as sensor of hydrogen peroxide-mediated signaling events. Might participate in the signaling cascades of growth factors and tumor necrosis factor-alpha by regulating the intracellular concentrations of H(2)O(2). Reduces an intramolecular disulfide bond in GDPD5 that gates the ability to GDPD5 to drive postmitotic motor neuron differentiation. The protein is Peroxiredoxin-1 (PRDX1) of Myotis lucifugus (Little brown bat).